The chain runs to 47 residues: Large ribosomal subunit protein bL33 (47 aa).

The protein belongs to the bacterial ribosomal protein bL33 family.

The protein is Large ribosomal subunit protein bL33 of Staphylococcus saprophyticus.